The sequence spans 223 residues: Large ribosomal subunit protein bL21 (223 aa).

Residues 110-149 (TALKSTTAEPKAADAPKAKAKAAPKAEKAAAPKAEKAPAK) form a disordered region. Residues 133-147 (PKAEKAAAPKAEKAP) show a composition bias toward basic and acidic residues.

It belongs to the bacterial ribosomal protein bL21 family. As to quaternary structure, part of the 50S ribosomal subunit. Contacts protein L20.

In terms of biological role, this protein binds to 23S rRNA in the presence of protein L20. In Maricaulis maris (strain MCS10) (Caulobacter maris), this protein is Large ribosomal subunit protein bL21.